The sequence spans 316 residues: Ribosomal RNA small subunit methyltransferase H (316 aa).

Residues Ala-35–His-37, Asp-55, Phe-84, Asp-105, and Gln-112 contribute to the S-adenosyl-L-methionine site.

Belongs to the methyltransferase superfamily. RsmH family.

The protein resides in the cytoplasm. The enzyme catalyses cytidine(1402) in 16S rRNA + S-adenosyl-L-methionine = N(4)-methylcytidine(1402) in 16S rRNA + S-adenosyl-L-homocysteine + H(+). In terms of biological role, specifically methylates the N4 position of cytidine in position 1402 (C1402) of 16S rRNA. This is Ribosomal RNA small subunit methyltransferase H from Streptococcus suis (strain 05ZYH33).